Consider the following 82-residue polypeptide: ATP synthase subunit c (82 aa).

2 consecutive transmembrane segments (helical) span residues 18–38 (LGEALGAGLAVIGAGLGIGKI) and 61–81 (IIAAALVEGVSLFAVVVCGFL).

Belongs to the ATPase C chain family. In terms of assembly, F-type ATPases have 2 components, F(1) - the catalytic core - and F(0) - the membrane proton channel. F(1) has five subunits: alpha(3), beta(3), gamma(1), delta(1), epsilon(1). F(0) has three main subunits: a(1), b(2) and c(10-14). The alpha and beta chains form an alternating ring which encloses part of the gamma chain. F(1) is attached to F(0) by a central stalk formed by the gamma and epsilon chains, while a peripheral stalk is formed by the delta and b chains.

The protein resides in the cell inner membrane. Functionally, f(1)F(0) ATP synthase produces ATP from ADP in the presence of a proton or sodium gradient. F-type ATPases consist of two structural domains, F(1) containing the extramembraneous catalytic core and F(0) containing the membrane proton channel, linked together by a central stalk and a peripheral stalk. During catalysis, ATP synthesis in the catalytic domain of F(1) is coupled via a rotary mechanism of the central stalk subunits to proton translocation. In terms of biological role, key component of the F(0) channel; it plays a direct role in translocation across the membrane. A homomeric c-ring of between 10-14 subunits forms the central stalk rotor element with the F(1) delta and epsilon subunits. The polypeptide is ATP synthase subunit c (Azobacteroides pseudotrichonymphae genomovar. CFP2).